We begin with the raw amino-acid sequence, 664 residues long: DNA ligase (664 aa).

NAD(+) is bound by residues 30 to 34, 79 to 80, and Glu-109; these read DFEFD and SL. Catalysis depends on Lys-111, which acts as the N6-AMP-lysine intermediate. Residues Arg-132, Glu-169, Lys-284, and Lys-308 each coordinate NAD(+). Residues Cys-403, Cys-406, Cys-421, and Cys-427 each contribute to the Zn(2+) site. In terms of domain architecture, BRCT spans 586-664; that stretch reads NRSEKLKGLT…NEDAFLNMLE (79 aa).

Belongs to the NAD-dependent DNA ligase family. LigA subfamily. Requires Mg(2+) as cofactor. The cofactor is Mn(2+).

It carries out the reaction NAD(+) + (deoxyribonucleotide)n-3'-hydroxyl + 5'-phospho-(deoxyribonucleotide)m = (deoxyribonucleotide)n+m + AMP + beta-nicotinamide D-nucleotide.. Functionally, DNA ligase that catalyzes the formation of phosphodiester linkages between 5'-phosphoryl and 3'-hydroxyl groups in double-stranded DNA using NAD as a coenzyme and as the energy source for the reaction. It is essential for DNA replication and repair of damaged DNA. The sequence is that of DNA ligase from Parabacteroides distasonis (strain ATCC 8503 / DSM 20701 / CIP 104284 / JCM 5825 / NCTC 11152).